The chain runs to 256 residues: MQEINGTSHLKMGIAITTYSNEKTSATRIQIIRDSLTSLKMFRNNVEVIIVVDGSYNTDHKKLLDEFNGDFEIIYREKNGGISKAKNTCIKLLLAKNIDIGFLADDDVLYCENWHNAYATSILNTKIDHFVYLPPQIYQSVLRKTTYNNIPVIECTSGGIAGCFMTFTPKIIQQIGYFRIYPYVYGCEHRDFSYRCLKNRLVPNIFDIDNSSNYLKLHHLSLDSSSIIVDKGGLALNIEKKKEYLNKFQEYVECIE.

Belongs to the glycosyltransferase 2 family.

This is an uncharacterized protein from Acanthamoeba polyphaga mimivirus (APMV).